The following is a 142-amino-acid chain: Rhinocerosin (142 aa).

The first 16 residues, 1–16 (MMKLYIVFGFIAFSAA), serve as a signal peptide directing secretion. Residues 17 to 70 (YVVPEGYYEPEYYPADGYESERVARASPAELIFDEDLADEPEVEEPQYYIRTRR) constitute a propeptide that is removed on maturation. Residues 72 to 96 (LQPGAPNFPMPGSQLPTSITSNIEK) form a disordered region. Polar residues predominate over residues 85 to 96 (QLPTSITSNIEK).

It belongs to the coleoptericin family. As to expression, strongly expressed in the fat body and the Malpighian tubules, and weakly expressed in hemocytes and midgut.

The protein resides in the secreted. Its function is as follows. Has strong antibacterial activity against E.coli, Streptococcus pyogenes, Staphylococcus aureus but not against Pseudomonas aeruginosa. This Oryctes rhinoceros (Coconut rhinoceros beetle) protein is Rhinocerosin.